Here is a 463-residue protein sequence, read N- to C-terminus: ATP-dependent protease ATPase subunit HslU (463 aa).

ATP-binding positions include V21, G63–E68, D276, E341, and R413.

This sequence belongs to the ClpX chaperone family. HslU subfamily. A double ring-shaped homohexamer of HslV is capped on each side by a ring-shaped HslU homohexamer. The assembly of the HslU/HslV complex is dependent on binding of ATP.

The protein localises to the cytoplasm. ATPase subunit of a proteasome-like degradation complex; this subunit has chaperone activity. The binding of ATP and its subsequent hydrolysis by HslU are essential for unfolding of protein substrates subsequently hydrolyzed by HslV. HslU recognizes the N-terminal part of its protein substrates and unfolds these before they are guided to HslV for hydrolysis. The protein is ATP-dependent protease ATPase subunit HslU of Thermotoga petrophila (strain ATCC BAA-488 / DSM 13995 / JCM 10881 / RKU-1).